The following is a 455-amino-acid chain: EP1-like glycoprotein 1 (455 aa).

An N-terminal signal peptide occupies residues methionine 1–alanine 22. Residues threonine 43–aspartate 163 form the Bulb-type lectin domain. N-linked (GlcNAc...) asparagine glycans are attached at residues asparagine 106, asparagine 191, asparagine 211, asparagine 241, and asparagine 289. The residue at position 374 (cysteine 374) is an S-nitrosocysteine. The region spanning cysteine 374–tyrosine 455 is the PAN domain. Cystine bridges form between cysteine 410-cysteine 432 and cysteine 414-cysteine 420. A glycan (N-linked (GlcNAc...) asparagine) is linked at asparagine 446.

The protein resides in the secreted. It is found in the cell wall. In Arabidopsis thaliana (Mouse-ear cress), this protein is EP1-like glycoprotein 1.